A 149-amino-acid polypeptide reads, in one-letter code: Large ribosomal subunit protein bL9 (149 aa).

Lys89 carries the post-translational modification N6-acetyllysine.

Belongs to the bacterial ribosomal protein bL9 family.

In terms of biological role, binds to the 23S rRNA. This Shigella boydii serotype 18 (strain CDC 3083-94 / BS512) protein is Large ribosomal subunit protein bL9.